A 132-amino-acid polypeptide reads, in one-letter code: Interferon-induced transmembrane protein 5 (132 aa).

Basic and acidic residues predominate over residues 1 to 11 (MDTAYPREDTR). The segment at 1-21 (MDTAYPREDTRAPTPSKAGAH) is disordered. Residues 1-36 (MDTAYPREDTRAPTPSKAGAHTALTLGAPHPPPRDH) lie on the Extracellular side of the membrane. Residues 37–57 (LIWSVFSTLYLNLCCLGFLAL) traverse the membrane as a helical segment. 3 S-palmitoyl cysteine lipidation sites follow: cysteine 50, cysteine 51, and cysteine 84. Residues 58–86 (AYSIKARDQKVVGDLEAARRFGSKAKCYN) lie on the Cytoplasmic side of the membrane. A helical membrane pass occupies residues 87–107 (ILAAMWTLVPPLLLLGLVVTG). Over 108 to 132 (ALHLARLAKDSAAFFSTKFDDADYD) the chain is Extracellular.

It belongs to the CD225/Dispanin family. Interacts with FKBP11. Palmitoylated. As to expression, detected in osteoblasts and fibroblasts (at protein level). Detected in bone.

The protein resides in the cell membrane. Required for normal bone mineralization. The protein is Interferon-induced transmembrane protein 5 (IFITM5) of Homo sapiens (Human).